A 133-amino-acid polypeptide reads, in one-letter code: Large ribosomal subunit protein bL17 (133 aa).

Belongs to the bacterial ribosomal protein bL17 family. Part of the 50S ribosomal subunit. Contacts protein L32.

This is Large ribosomal subunit protein bL17 from Pseudoalteromonas translucida (strain TAC 125).